A 199-amino-acid polypeptide reads, in one-letter code: Photosystem II D1 precursor processing protein PSB27-H2, chloroplastic (199 aa).

Belongs to the Psb27 family. As to quaternary structure, interacts with the C-terminus of both the precursor and mature form of D1.

It localises to the plastid. Its subcellular location is the chloroplast thylakoid lumen. Required, but not essential, for D1 (psbA) precursor processing and thus correct photosystem II assembly (PSII). This Arabidopsis thaliana (Mouse-ear cress) protein is Photosystem II D1 precursor processing protein PSB27-H2, chloroplastic (PSB27-2).